A 105-amino-acid chain; its full sequence is Small ribosomal subunit protein uS17 (105 aa).

The protein belongs to the universal ribosomal protein uS17 family. As to quaternary structure, part of the 30S ribosomal subunit.

Its function is as follows. One of the primary rRNA binding proteins, it binds specifically to the 5'-end of 16S ribosomal RNA. This is Small ribosomal subunit protein uS17 from Thermus thermophilus (strain ATCC BAA-163 / DSM 7039 / HB27).